Here is a 492-residue protein sequence, read N- to C-terminus: Catalase isozyme B (492 aa).

The disordered stretch occupies residues 1 to 20; sequence MDPYKHRPSSGSNSTFWTTN. The span at 9–20 shows a compositional bias: polar residues; the sequence is SSGSNSTFWTTN. Arg-62 is a heme binding site. His-65 is a catalytic residue. Arg-102 contacts heme. Residue Asn-138 is part of the active site. Phe-151 contributes to the heme binding site. Tyr-210 carries the post-translational modification Phosphotyrosine. The 3-(S-cysteinyl)-tyrosine (Cys-Tyr) cross-link spans 325 to 348; sequence CPAIIVPGIHYSDDKLLQTRIFSY. Heme is bound by residues Arg-344, Tyr-348, and Arg-355. The short motif at 484 to 492 is the Peroxisome targeting signal element; sequence SRLNLKPNM.

This sequence belongs to the catalase family. Homotetramer. Interacts with GLO1 and GLO4; these interactions are disturbed by alpha-hydroxy-2-pyridinemethanesulfonic acid (HPMS) and salicylic acid (SA). Interacts with STRK1 at the plasma membrane. It depends on heme as a cofactor. Predominantly expressed in roots and, at low levels, in leaves (e.g. sheaths). Detected in seeds. Also present in panicles and culms. Observed in stems and anthers.

It localises to the peroxisome. It is found in the glyoxysome. The protein localises to the cell membrane. It catalyses the reaction 2 H2O2 = O2 + 2 H2O. Its activity is regulated as follows. Strongly inhibited by beta-mercaptoethanol, sodium azide and potassium cyanide. Slightly repressed by 3-amino-1,2,4-triazole (3-AT). Activity is repressed proportionally to increased concentration of NaCl, KCl, LiCl and MgCl(2). In terms of biological role, occurs in almost all aerobically respiring organisms and serves to protect cells from the toxic effects of hydrogen peroxide. May prevent the excessive accumulation of H(2)O(2) during water stress in response to the accumulation of abscisic acid (ABA). Involved in the modulation of ROS levels related to root growth regulation. Required for pollen viability and floret fertility upon heat stress (HS) by detoxifying reactive oxygen species (ROS) and malondialdehyde (MDA) accumulation in developing anthers exposed to HS. This chain is Catalase isozyme B (CATB), found in Oryza sativa subsp. japonica (Rice).